Consider the following 1451-residue polypeptide: DNA polymerase III PolC-type (1451 aa).

Residues 416 to 575 (FVIFDIETTG…YDTEALKKVF (160 aa)) enclose the Exonuclease domain.

The protein belongs to the DNA polymerase type-C family. PolC subfamily.

It localises to the cytoplasm. The catalysed reaction is DNA(n) + a 2'-deoxyribonucleoside 5'-triphosphate = DNA(n+1) + diphosphate. Functionally, required for replicative DNA synthesis. This DNA polymerase also exhibits 3' to 5' exonuclease activity. The polypeptide is DNA polymerase III PolC-type (Mycoplasma genitalium (strain ATCC 33530 / DSM 19775 / NCTC 10195 / G37) (Mycoplasmoides genitalium)).